Here is a 184-residue protein sequence, read N- to C-terminus: Tumor necrosis factor receptor superfamily member 13C (184 aa).

Topologically, residues 1 to 78 (MRRGPRSLRG…EAALPLPGLL (78 aa)) are extracellular. Residues 18-35 (PCVPAECFDLLVRHCVAC) form a TNFR-Cys; truncated repeat. Intrachain disulfides connect Cys19–Cys32 and Cys24–Cys35. The interval 26–31 (DLLVRH) is essential for TNFSF13B/TALL1/BAFF/BLyS binding. Positions 43–62 (PKPAGASSPAPRTALQPQES) are disordered. A helical; Signal-anchor for type III membrane protein membrane pass occupies residues 79-99 (FGAPALLGLALVLALVLVGLV). Residues 100–184 (SWRRRQRRLR…TTKTAGPEQQ (85 aa)) lie on the Cytoplasmic side of the membrane. A disordered region spans residues 107–184 (RLRGASSAEA…TTKTAGPEQQ (78 aa)). A compositionally biased stretch (basic and acidic residues) spans 118–128 (DGDKDAPEPLD). Residues 168-184 (LGSTELVTTKTAGPEQQ) show a composition bias toward polar residues.

Highly expressed in spleen and lymph node, and in resting B-cells. Detected at lower levels in activated B-cells, resting CD4+ T-cells, in thymus and peripheral blood leukocytes.

The protein resides in the membrane. Its function is as follows. B-cell receptor specific for TNFSF13B/TALL1/BAFF/BLyS. Promotes the survival of mature B-cells and the B-cell response. This Homo sapiens (Human) protein is Tumor necrosis factor receptor superfamily member 13C (TNFRSF13C).